A 289-amino-acid chain; its full sequence is Thiosulfate sulfurtransferase (289 aa).

The Rhodanese 1 domain maps to 24–142; sequence VGAGLRVLDA…WVKEGHPVTA (119 aa). Residues 143-158 form a hinge region; it reads EPSQPAEAVFKAKLDK. In terms of domain architecture, Rhodanese 2 spans 172–284; the sequence is GSKKFQVVDS…WFHRAPPQYK (113 aa). Arg-186 is a binding site for substrate. Cys-244 serves as the catalytic Cysteine persulfide intermediate. Lys-246 lines the substrate pocket.

As to quaternary structure, monomer. Expressed in numerous tissues.

It is found in the mitochondrion matrix. The enzyme catalyses thiosulfate + hydrogen cyanide = thiocyanate + sulfite + 2 H(+). Together with MRPL18, acts as a mitochondrial import factor for the cytosolic 5S rRNA. Only the nascent unfolded cytoplasmic form is able to bind to the 5S rRNA. Formation of iron-sulfur complexes and cyanide detoxification. The polypeptide is Thiosulfate sulfurtransferase (TST) (Gallus gallus (Chicken)).